The following is a 59-amino-acid chain: Large ribosomal subunit protein bL32 (59 aa).

The tract at residues Met-1–Asp-59 is disordered. Over residues Arg-49–Asp-59 the composition is skewed to basic residues.

The protein belongs to the bacterial ribosomal protein bL32 family.

This chain is Large ribosomal subunit protein bL32, found in Ralstonia pickettii (strain 12J).